The sequence spans 119 residues: Large ribosomal subunit protein bL20 (119 aa).

This sequence belongs to the bacterial ribosomal protein bL20 family.

In terms of biological role, binds directly to 23S ribosomal RNA and is necessary for the in vitro assembly process of the 50S ribosomal subunit. It is not involved in the protein synthesizing functions of that subunit. In Thermoanaerobacter sp. (strain X514), this protein is Large ribosomal subunit protein bL20.